The primary structure comprises 84 residues: Cell division topological specificity factor (84 aa).

Belongs to the MinE family.

In terms of biological role, prevents the cell division inhibition by proteins MinC and MinD at internal division sites while permitting inhibition at polar sites. This ensures cell division at the proper site by restricting the formation of a division septum at the midpoint of the long axis of the cell. This is Cell division topological specificity factor from Desulfotalea psychrophila (strain LSv54 / DSM 12343).